The primary structure comprises 89 residues: Small ribosomal subunit protein uS15 (89 aa).

The protein belongs to the universal ribosomal protein uS15 family. In terms of assembly, part of the 30S ribosomal subunit. Forms a bridge to the 50S subunit in the 70S ribosome, contacting the 23S rRNA.

In terms of biological role, one of the primary rRNA binding proteins, it binds directly to 16S rRNA where it helps nucleate assembly of the platform of the 30S subunit by binding and bridging several RNA helices of the 16S rRNA. Functionally, forms an intersubunit bridge (bridge B4) with the 23S rRNA of the 50S subunit in the ribosome. This is Small ribosomal subunit protein uS15 from Staphylococcus saprophyticus subsp. saprophyticus (strain ATCC 15305 / DSM 20229 / NCIMB 8711 / NCTC 7292 / S-41).